The chain runs to 941 residues: Isoleucine--tRNA ligase (941 aa).

The short motif at 59 to 69 (PYANGNIHIGH) is the 'HIGH' region element. Position 562 (Glu562) interacts with L-isoleucyl-5'-AMP. The 'KMSKS' region signature appears at 603–607 (KMSKS). Lys606 contributes to the ATP binding site. Zn(2+) is bound by residues Cys904, Cys907, Cys924, and Cys927.

Belongs to the class-I aminoacyl-tRNA synthetase family. IleS type 1 subfamily. In terms of assembly, monomer. The cofactor is Zn(2+).

It localises to the cytoplasm. The enzyme catalyses tRNA(Ile) + L-isoleucine + ATP = L-isoleucyl-tRNA(Ile) + AMP + diphosphate. In terms of biological role, catalyzes the attachment of isoleucine to tRNA(Ile). As IleRS can inadvertently accommodate and process structurally similar amino acids such as valine, to avoid such errors it has two additional distinct tRNA(Ile)-dependent editing activities. One activity is designated as 'pretransfer' editing and involves the hydrolysis of activated Val-AMP. The other activity is designated 'posttransfer' editing and involves deacylation of mischarged Val-tRNA(Ile). In Haemophilus influenzae (strain ATCC 51907 / DSM 11121 / KW20 / Rd), this protein is Isoleucine--tRNA ligase.